The primary structure comprises 492 residues: MITLESLEMLLSIDENELLDDLVVTLLATPQLAFFFEKYPSLKSALLNDLPHWKETLKQRLRTTQVPPDLEKEFSCYQRSQSIDNQAFQTRLPAIMDTLSNVESPFLTQASQLITAPERTLGQKVTSGLHALFLQRWRLSLTLQTVSLHQQLMEQEREILLDELQQRLTLSGKLEPILAENENAAGRLWDLSAAQRIQTDPRPLLDFGAFLQRQPALQKLAERLGRSRETKSILTQEAPKEAFRVSVREPATVPEQVSGVHQSDDILRLMPTELVTLGISELEYEFYRRLLEHRLLTYRLQGESWREKITERPVVHQQNEQQPRGPFIVCVDTSGSMGGFNERCAKAFCLALMRIALADNRRCYIMLFSTGVVKYELTSADGLEQAIRFLSQSFRGGTDMSACLSALLDKMDDALWHDADAVVISDFIAQRLPDEVVNKVKSRQTQLQHRFHAVAMSDHGKPGIMHIFDHIWRFDTGLKSRLMRRWQHGKAY.

Belongs to the ViaA family. In terms of assembly, homodimer. Interacts with RavA.

Its subcellular location is the cytoplasm. Functionally, component of the RavA-ViaA chaperone complex, which may act on the membrane to optimize the function of some of the respiratory chains. ViaA stimulates the ATPase activity of RavA. This is Regulatory protein ViaA from Pectobacterium carotovorum subsp. carotovorum (strain PC1).